The sequence spans 73 residues: UPF0352 protein HSM_0097 (73 aa).

This sequence belongs to the UPF0352 family.

The sequence is that of UPF0352 protein HSM_0097 from Histophilus somni (strain 2336) (Haemophilus somnus).